The chain runs to 1150 residues: MEADWDELSRIPVPAPSVHALPTIATAIAFDDVMELLWGRITSFFGPELQRYTSVRAHPATEPVRQIIFHDRGVISLSPKSVHMITRRGLTQWHIAHEEMTDLRCMSFTAQTNRIIVAGCQKSMFTIDIDKGIIIDKLHTEYNYTIMKKSRYLCAATDTGSVNALSLNDFSVVKSWKAHGTAVNDMDARNDLLVTCGFSVRHLGSPIVDPLANVYDLKTLSPLPPIPFHAGAAYVRMHPKLHTTSFVASQTGQLQVVDLMNPNAINLRQANVSFMLGIDLSPSGEALAINDAECAIHLWGSPAKVHFNEMSKEAEFGDVAPRPPTLDWSPETPLSMIGMPYYHERLFSAWPSHLVFEVGSPPPQVDQALIPYLRPAELGHHAPNPKKTRRYQVENTRALASAEPALIAPKFLSEKAREQNKAKSEGAISDAAEALAGAKINGETDDDPLLKYSNVEIKYSRFGVDDFDFRFYNQTTFSGLETHIANSFTNALLQLFKFIPYIRNVALHHAASSCIFETCLLCEMGYLFDMLEKASGQNCQATNLLKTFSSYREASNLGLFEENLTNKSLSAAIQAVNRFFLGQISHDFRMISPSSDDLDHRLATVASESIRCMFCQNEIVRPGNSLVNELNYPAIDIKQARRNPAFRFSNILRASIEREAQNRGWCNYCRRYQQVAIRKSVHRMPQVLMLNAALTNPICRRLWAIPGWLPEEVGIVIEGGQILCFEGEDLKLRVQAKMPGLVVYDLVGLVCEIDIPEHQKAHLVSFINVSISSREPETKNKWHLFNDFLVTEVDKEEALRFNQPWKIPCVLAYQVQDGRHAMDDTWKDALDTTLLFRDWSLNGGRPVESRVTLSEEEKPTPGTPVALDTEFVDLEKAEIDVKADGSQEIVRPSKSGLARVSVLRGSGIREGVPFIDDYITIKENIVDYVTQYSGIKPGDLDPRVSQHNLVPLKVAYKKLWLLLNLGCVFVGHGLASDFRKVNIQVPKSQTVDTQYLFFHPGKNRRLSLRYLAWAVFKEYIQEEPADDSQGHDSIEDARMALRLWKKFKEYEDAGIVSQILEEIFREGSKLGFRPPPRNGVPTVLSRPGTAVTMQNNSGRNTPSTSDVAGAAASAPATPRQAFRRSIALTPSNGSFAGPGTGDFFSGSPLK.

WD repeat units lie at residues 96-139 (AHEE…DKLH) and 270-309 (ANVS…HFNE). A linker region spans residues 310–446 (MSKEAEFGDV…GAKINGETDD (137 aa)). The USP domain maps to 447–816 (DPLLKYSNVE…IPCVLAYQVQ (370 aa)). Positions 865 to 1043 (VALDTEFVDL…IEDARMALRL (179 aa)) constitute an Exonuclease domain. 4 residues coordinate a divalent metal cation: Asp868, Glu870, Asp977, and Asp1036. The segment at 1074 to 1150 (PPPRNGVPTV…GDFFSGSPLK (77 aa)) is disordered. Polar residues predominate over residues 1091-1106 (VTMQNNSGRNTPSTSD). Low complexity predominate over residues 1108 to 1120 (AGAAASAPATPRQ).

Belongs to the peptidase C19 family. PAN2 subfamily. As to quaternary structure, forms a heterotrimer with an asymmetric homodimer of the regulatory subunit pan3 to form the poly(A)-nuclease (PAN) deadenylation complex. Requires a divalent metal cation as cofactor.

Its subcellular location is the cytoplasm. It catalyses the reaction Exonucleolytic cleavage of poly(A) to 5'-AMP.. Its activity is regulated as follows. Positively regulated by the regulatory subunit pan3. Its function is as follows. Catalytic subunit of the poly(A)-nuclease (PAN) deadenylation complex, one of two cytoplasmic mRNA deadenylases involved in mRNA turnover. PAN specifically shortens poly(A) tails of RNA and the activity is stimulated by poly(A)-binding protein pab1. PAN deadenylation is followed by rapid degradation of the shortened mRNA tails by the CCR4-NOT complex. Deadenylated mRNAs are then degraded by two alternative mechanisms, namely exosome-mediated 3'-5' exonucleolytic degradation, or deadenylation-dependent mRNA decaping and subsequent 5'-3' exonucleolytic degradation by xrn1. May also be involved in post-transcriptional maturation of mRNA poly(A) tails. The protein is PAN2-PAN3 deadenylation complex catalytic subunit pan2 of Aspergillus niger (strain ATCC MYA-4892 / CBS 513.88 / FGSC A1513).